A 220-amino-acid chain; its full sequence is Flavin-dependent thymidylate synthase (220 aa).

Positions 1–208 constitute a ThyX domain; it reads MKIDILDKGF…PWTFEAFLKY (208 aa). FAD contacts are provided by residues Thr-55, 78-81, and Glu-86; that span reads RHRI. Residues 75–78, 86–90, and Arg-147 each bind dUMP; these read QWFR and ELSGR. The ThyX motif signature appears at 78 to 88; sequence RHRIASYNELS. FAD is bound by residues 163 to 165 and Asn-169; that span reads NAR. Arg-174 serves as a coordination point for dUMP. The active-site Involved in ionization of N3 of dUMP, leading to its activation is the Arg-174.

This sequence belongs to the thymidylate synthase ThyX family. Homotetramer. It depends on FAD as a cofactor.

It carries out the reaction dUMP + (6R)-5,10-methylene-5,6,7,8-tetrahydrofolate + NADPH + H(+) = dTMP + (6S)-5,6,7,8-tetrahydrofolate + NADP(+). The catalysed reaction is dUMP + formaldehyde + NADPH + H(+) = dTMP + NADP(+) + H2O. Its pathway is pyrimidine metabolism; dTTP biosynthesis. Functionally, catalyzes the reductive methylation of 2'-deoxyuridine-5'-monophosphate (dUMP or deoxyuridylate) to 2'-deoxythymidine-5'-monophosphate (dTMP or deoxythymidylate) while utilizing 5,10-methylenetetrahydrofolate (mTHF) as the methylene donor, and NAD(P)H and FADH(2) as the reductant. This reaction is a critical step in DNA biosynthesis. Can also use formaldehyde instead of mTHF as a direct methylene donor for dTMP synthesis. However, the tighter binding of ThyX to mTHF (KD of 4 uM) compared to formaldehyde (KD of 20 mM) confirms that methylene tetrahydrofolate acts as the biological carbon donor for ThyX, serving as a formaldehyde carrier/transporter and thus avoiding genotoxic effects. The chain is Flavin-dependent thymidylate synthase from Thermotoga maritima (strain ATCC 43589 / DSM 3109 / JCM 10099 / NBRC 100826 / MSB8).